The primary structure comprises 508 residues: MEEFKRYLELDRSQQHDFVYPLIFQEYIYALAHDHGLNRSILLENIGYDNKSSLLIVKRLITHLITQMYQQNHFLFSANDSNQNPFLGHNTNLYFQMILEGFAVVVEIPFSLRLRFSLEGKEIVKSQNLRSIHSIFPFLEDKFSHLNYVLDILIPHSIHLEILVQTLRYWVKDASSLYLLRFFLHEYRNWNSLITPKKSSFSFSKRNQRLFLFLYNFHICEYESIFVFLRNQSSHLRSISSGTFLERRYFYEKIEHFVEVFTKDFQAILWFFKDPFIHYVRYQGKSILASKGTSLLMNKWRYYLVNFWQCYFYIWSQPGRIHINQLSKHSLDFLGYLSSVRLNPSMVRSQMLENSFLIGNAIKKFDTIVPIIPMIGSLSKAKFCNVLGHPISKPVWADLSDSDIIDRFGRIYRNLSHYHSGSSKKTSLYRIKYILRLSCARTLARKHKSTVRAFLKRLGSELLEEFFTGEEQVFSLTFPKASSTSRGLYRRRIWYLDIICINDLANHE.

The protein belongs to the intron maturase 2 family. MatK subfamily.

It localises to the plastid. Its subcellular location is the chloroplast. Its function is as follows. Usually encoded in the trnK tRNA gene intron. Probably assists in splicing its own and other chloroplast group II introns. The chain is Maturase K from Stewartia pseudocamellia (Japanese stewartia).